A 127-amino-acid polypeptide reads, in one-letter code: PRA1 family protein C (127 aa).

3 helical membrane-spanning segments follow: residues 15–35, 53–73, and 76–96; these read IFIS…LIVA, VIDD…IFLL, and VSRG…VHGM.

Belongs to the PRA1 family.

Its subcellular location is the endoplasmic reticulum membrane. Its function is as follows. May be involved in both secretory and endocytic intracellular trafficking in the endosomal/prevacuolar compartments. The polypeptide is PRA1 family protein C (PRA1C) (Arabidopsis thaliana (Mouse-ear cress)).